The following is a 375-amino-acid chain: Growth/differentiation factor 8 (375 aa).

A signal peptide spans M1–L23. A propeptide spanning residues N24–R266 is cleaved from the precursor. N71 is a glycosylation site (N-linked (GlcNAc...) asparagine). 4 disulfides stabilise this stretch: C272–C282, C281–C340, C309–C372, and C313–C374.

The protein belongs to the TGF-beta family. In terms of assembly, homodimer; disulfide-linked. Interacts with WFIKKN2, leading to inhibit its activity. Interacts with FSTL3. Post-translationally, synthesized as large precursor molecule that undergoes proteolytic cleavage to generate an N-terminal propeptide and a disulfide linked C-terminal dimer, which is the biologically active molecule. The circulating form consists of a latent complex of the C-terminal dimer and other proteins, including its propeptide, which maintain the C-terminal dimer in a latent, inactive state. Ligand activation requires additional cleavage of the prodomain by a tolloid-like metalloproteinase.

It localises to the secreted. Acts specifically as a negative regulator of skeletal muscle growth. This chain is Growth/differentiation factor 8 (MSTN), found in Pan paniscus (Pygmy chimpanzee).